Consider the following 543-residue polypeptide: EH domain-containing protein 2 (543 aa).

Phosphoserine occurs at positions 3 and 44. In terms of domain architecture, Dynamin-type G spans 55–286 (FDGKPMVLVA…DLFRDIQGLP (232 aa)). Residues 65–72 (GQYSTGKT) are G1 motif. 65 to 72 (GQYSTGKT) lines the ATP pocket. The interval 91–92 (EP) is G2 motif. The segment at 153 to 156 (DTPG) is G3 motif. Residues 219–222 (NKAD) are G4 motif. An ATP-binding site is contributed by lysine 220. Position 243 (valine 243) is a region of interest, G5 motif. Tryptophan 258 contacts ATP. A mediates membrane-binding region spans residues 320-340 (TVFGKENKKKQLILKLPVIFA). 5 positions are modified to phosphoserine: serine 438, serine 468, serine 470, serine 484, and serine 493. Positions 449-537 (DKSKYDEIFY…RRLVPPSKRR (89 aa)) constitute an EH domain. In terms of domain architecture, EF-hand spans 481–516 (LPNSVLGRIWKLSDVDRDGMLDDEEFALASHLIEAK). The Ca(2+) site is built by aspartate 494, aspartate 496, aspartate 498, methionine 500, and glutamate 505. The interval 521–543 (GLPTNLPRRLVPPSKRRQKGSAE) is disordered. A compositionally biased stretch (basic residues) spans 534–543 (SKRRQKGSAE).

It belongs to the TRAFAC class dynamin-like GTPase superfamily. Dynamin/Fzo/YdjA family. EHD subfamily. As to quaternary structure, homodimer and homooligomer. Interacts with EHD1. May also interact with EHD3 and EHD4. Interacts with MYOF. Interacts with EHBP1. Interacts with FER1L5 (via second C2 domain). Interacts with CAV1 in a cholesterol-dependent manner. Interacts (via EH domain) with PACSIN2 (via NPF motifs); this interaction probably stabilizes the caveolae. In terms of tissue distribution, detected in lung and adipocytes. Detected at lower levels in heart and skeletal muscle.

The protein localises to the cell membrane. It localises to the membrane. It is found in the caveola. Its subcellular location is the endosome membrane. The protein resides in the cytoplasm. The protein localises to the cytosol. With respect to regulation, the very low intrinsic ATPase activity is increased upon interaction with liposomes. Its function is as follows. ATP- and membrane-binding protein that controls membrane reorganization/tubulation upon ATP hydrolysis. Plays a role in membrane trafficking between the plasma membrane and endosomes. Important for the internalization of GLUT4. Required for fusion of myoblasts to skeletal muscle myotubes. Required for normal translocation of FER1L5 to the plasma membrane. Regulates the equilibrium between cell surface-associated and cell surface-dissociated caveolae by constraining caveolae at the cell membrane. The sequence is that of EH domain-containing protein 2 from Mus musculus (Mouse).